The chain runs to 246 residues: Ly6/PLAUR domain-containing protein 4 (246 aa).

The first 26 residues, 1 to 26 (MGPQHLRLVQLFCLLGAISTLPRAGA), serve as a signal peptide directing secretion. An N-linked (GlcNAc...) asparagine glycan is attached at Asn117. Positions 142 to 223 (CPTCVGEHMK…LNILEKSQIV (82 aa)) constitute a UPAR/Ly6 domain. A lipid anchor (GPI-anchor amidated alanine) is attached at Ala225. The propeptide at 226-246 (ASSRQDPAWGVVLGLLFAFRD) is removed in mature form.

The protein localises to the cell membrane. This chain is Ly6/PLAUR domain-containing protein 4 (LYPD4), found in Homo sapiens (Human).